A 280-amino-acid polypeptide reads, in one-letter code: Ribonuclease Z (280 aa).

The Zn(2+) site is built by His-61, His-63, Asp-65, His-66, His-153, Asp-176, and His-240. The active-site Proton acceptor is the Asp-65.

Belongs to the RNase Z family. Homodimer. The cofactor is Zn(2+).

It catalyses the reaction Endonucleolytic cleavage of RNA, removing extra 3' nucleotides from tRNA precursor, generating 3' termini of tRNAs. A 3'-hydroxy group is left at the tRNA terminus and a 5'-phosphoryl group is left at the trailer molecule.. Functionally, zinc phosphodiesterase, which displays some tRNA 3'-processing endonuclease activity. Probably involved in tRNA maturation, by removing a 3'-trailer from precursor tRNA. The chain is Ribonuclease Z from Mycobacterium bovis (strain BCG / Pasteur 1173P2).